Here is a 355-residue protein sequence, read N- to C-terminus: Guanine nucleotide-binding protein G(i) subunit alpha-2 (355 aa).

Residue Gly2 is the site of N-myristoyl glycine attachment. A lipid anchor (S-palmitoyl cysteine) is attached at Cys3. A G-alpha domain is found at 32 to 355; sequence REVKLLLLGA…KNNLKDCGLF (324 aa). Residues 35–48 are G1 motif; the sequence is KLLLLGAGESGKST. GTP is bound by residues 40–47, 176–182, 201–205, 270–273, and Ala327; these read GAGESGKS, LRTRVKT, DVGGQ, and NKKD. Positions 47 and 182 each coordinate Mg(2+). The segment at 174–182 is G2 motif; the sequence is DVLRTRVKT. A G3 motif region spans residues 197 to 206; sequence FKMFDVGGQR. The interval 266-273 is G4 motif; sequence ILFLNKKD. Residues 325–330 are G5 motif; that stretch reads TCATDT.

This sequence belongs to the G-alpha family. G(i/o/t/z) subfamily. G proteins are composed of 3 units; alpha, beta and gamma. The alpha chain contains the guanine nucleotide binding site.

It localises to the cytoplasm. Its subcellular location is the cytoskeleton. The protein localises to the microtubule organizing center. The protein resides in the centrosome. It is found in the cell membrane. Functionally, guanine nucleotide-binding proteins (G proteins) are involved as modulators or transducers in various transmembrane signaling systems. The G(i) proteins are involved in hormonal regulation of adenylate cyclase: they inhibit the cyclase in response to beta-adrenergic stimuli. May play a role in cell division. This is Guanine nucleotide-binding protein G(i) subunit alpha-2 (GNAI2) from Gallus gallus (Chicken).